A 357-amino-acid chain; its full sequence is MISEAPPFWWRKADWRAWLLLPVSFLYGRIAGHRMAHGRRASVAIPVICVGNFTVGGAGKTPTALTIARAAKAKGLKPGFLSRGYGGSLDVTTVVDPDHHRAVAVGDEPLLLAREALTVISRRRVDGAQRLVAEGADLIIMDDGFQSARLAIDYALLVIDATRGLGNGHIVPAGPVRAPIRQQLRSATALLKVGGGNAADRIVRMAARAAKPYFTASLKVRGDNTLAGMKVLAFAGIADPAKFFRTVESRGAEITVAKSFGDHEHLTEDEIDDILTTAERQDLLIVTTSKDFVRLSGHPGKAAQLAEKCRVIEVDMVFEDHLAPSLIIDRAIVACRERRLREMKAGIKAMPGKAGPL.

54-61 (TVGGAGKT) serves as a coordination point for ATP.

It belongs to the LpxK family.

It carries out the reaction a lipid A disaccharide + ATP = a lipid IVA + ADP + H(+). The protein operates within glycolipid biosynthesis; lipid IV(A) biosynthesis; lipid IV(A) from (3R)-3-hydroxytetradecanoyl-[acyl-carrier-protein] and UDP-N-acetyl-alpha-D-glucosamine: step 6/6. Its function is as follows. Transfers the gamma-phosphate of ATP to the 4'-position of a tetraacyldisaccharide 1-phosphate intermediate (termed DS-1-P) to form tetraacyldisaccharide 1,4'-bis-phosphate (lipid IVA). The chain is Tetraacyldisaccharide 4'-kinase from Rhizobium leguminosarum bv. trifolii (strain WSM2304).